The sequence spans 354 residues: Short-chain dehydrogenase/reductase SAT2 (354 aa).

NADP(+) is bound by residues isoleucine 31, aspartate 85, arginine 201, and valine 233.

Belongs to the short-chain dehydrogenases/reductases (SDR) family.

Its pathway is mycotoxin biosynthesis. Short-chain dehydrogenase/reductase; part of the satratoxin SC1 cluster involved in the biosynthesis of satratoxins, trichothecene mycotoxins that are associated with human food poisonings. Satratoxins are suggested to be made by products of multiple gene clusters (SC1, SC2 and SC3) that encode 21 proteins in all, including polyketide synthases, acetyltransferases, and other enzymes expected to modify the trichothecene skeleton. SC1 encodes 10 proteins, SAT1 to SAT10. The largest are SAT8, which encodes a putative polyketide synthase (PKS) with a conventional non-reducing architecture, and SAT10, a putative protein containing four ankyrin repeats and thus may be involved in protein scaffolding. The putative short-chain reductase SAT3 may assist the PKS in some capacity. SAT6 contains a secretory lipase domain and acts probably as a trichothecene esterase. SAT5 encodes a putative acetyltransferase, and so, with SAT6, may affect endogenous protection from toxicity. The probable transcription factor SAT9 may regulate the expression of the SC1 cluster. SC2 encodes proteins SAT11 to SAT16, the largest of which encodes the putative reducing PKS SAT13. SAT11 is a cytochrome P450 monooxygenase, while SAT14 and SAT16 are probable acetyltransferases. The SC2 cluster may be regulated by the transcription factor SAT15. SC3 is a small cluster that encodes 5 proteins, SAT17 to SAT21. SAT21 is a putative MFS-type transporter which may have a role in exporting secondary metabolites. The four other proteins putatively encoded in SC3 include the taurine hydroxylase-like protein SAT17, the O-methyltransferase SAT18, the acetyltransferase SAT19, and the Cys6-type zinc finger SAT20, the latter being probably involved in regulation of SC3 expression. The sequence is that of Short-chain dehydrogenase/reductase SAT2 from Stachybotrys chartarum (strain CBS 109288 / IBT 7711) (Toxic black mold).